Here is a 322-residue protein sequence, read N- to C-terminus: Acetyl-coenzyme A carboxylase carboxyl transferase subunit alpha (322 aa).

A CoA carboxyltransferase C-terminal domain is found at 30–293 (AVDISAEILR…KKALQDSLKL (264 aa)).

This sequence belongs to the AccA family. As to quaternary structure, acetyl-CoA carboxylase is a heterohexamer composed of biotin carboxyl carrier protein (AccB), biotin carboxylase (AccC) and two subunits each of ACCase subunit alpha (AccA) and ACCase subunit beta (AccD).

The protein localises to the cytoplasm. The catalysed reaction is N(6)-carboxybiotinyl-L-lysyl-[protein] + acetyl-CoA = N(6)-biotinyl-L-lysyl-[protein] + malonyl-CoA. The protein operates within lipid metabolism; malonyl-CoA biosynthesis; malonyl-CoA from acetyl-CoA: step 1/1. Its function is as follows. Component of the acetyl coenzyme A carboxylase (ACC) complex. First, biotin carboxylase catalyzes the carboxylation of biotin on its carrier protein (BCCP) and then the CO(2) group is transferred by the carboxyltransferase to acetyl-CoA to form malonyl-CoA. The polypeptide is Acetyl-coenzyme A carboxylase carboxyl transferase subunit alpha (Nitrosospira multiformis (strain ATCC 25196 / NCIMB 11849 / C 71)).